A 94-amino-acid polypeptide reads, in one-letter code: Enhancer of yellow 2 transcription factor (94 aa).

This sequence belongs to the ENY2 family. In terms of assembly, component of the nuclear pore complex (NPC)-associated AMEX complex (anchoring and mRNA export complex), composed of at least e(y)2 and xmas-2. Component of the SAGA transcription coactivator-HAT complexes, at least composed of Ada2b, e(y)2, Pcaf/Gcn5, Taf10 and Nipped-A/Trrap. Within the SAGA complex, e(y)2, Sgf11, and not/nonstop form an additional subcomplex of SAGA called the DUB module (deubiquitination module). Component of the THO complex, composed of at least e(y)2, HPR1, THO2, THOC5, THOC6 and THOC7. Interacts with e(y)1. Interacts with su(Hw) (via zinc fingers). Interacts with xmas-2; required for localization to the nuclear periphery. Interacts with the nuclear pore complex (NPC).

The protein resides in the nucleus. Its subcellular location is the nucleoplasm. It localises to the cytoplasm. Its function is as follows. Involved in mRNA export coupled transcription activation by association with both the AMEX and the SAGA complexes. The SAGA complex is a multiprotein complex that activates transcription by remodeling chromatin and mediating histone acetylation and deubiquitination. Within the SAGA complex, participates in a subcomplex that specifically deubiquitinates histone H2B. The SAGA complex is recruited to specific gene promoters by activators, where it is required for transcription. Required for nuclear receptor-mediated transactivation. Involved in transcription elongation by recruiting the THO complex onto nascent mRNA. The AMEX complex functions in docking export-competent ribonucleoprotein particles (mRNPs) to the nuclear entrance of the nuclear pore complex (nuclear basket). AMEX participates in mRNA export and accurate chromatin positioning in the nucleus by tethering genes to the nuclear periphery. This is Enhancer of yellow 2 transcription factor from Drosophila grimshawi (Hawaiian fruit fly).